The following is a 2512-amino-acid chain: Isonitrile lipopeptide synthase (2512 aa).

Carrier domains are found at residues 935-1003 and 1984-2059; these read AAGL…PTPD and APAG…GRDA. O-(pantetheine 4'-phosphoryl)serine is present on residues serine 963 and serine 2019. The Thioester reductase (TE) domain occupies 2112-2372; sequence LTGATGFLGR…LPVTFVAEAI (261 aa).

It belongs to the ATP-dependent AMP-binding enzyme family. Requires pantetheine 4'-phosphate as cofactor.

The catalysed reaction is 2 a (3R)-3-isocyanyl-fatty acyl-[ACP] + L-lysine + ATP + 2 NADPH = an isonitrile lipopeptide + 2 holo-[ACP] + AMP + diphosphate + 2 NADP(+). Nonribosomal peptide synthetase (NRPS) involved in the biosynthesis of a unique class of isonitrile lipopeptides (INLPs) that seem to function as virulence factors in M.tuberculosis and to play a role in metal acquisition. Catalyzes the final step in the pathway, i.e. the condensation of a (3R)-3-isocyanyl-fatty acyl-[ACP] to both amino groups of a lysine, producing isonitrile lipopeptides. In Mycobacterium tuberculosis (strain ATCC 25618 / H37Rv), this protein is Isonitrile lipopeptide synthase.